Reading from the N-terminus, the 506-residue chain is Histidine ammonia-lyase (506 aa).

The 5-imidazolinone (Ala-Gly) cross-link spans 143-145 (ASG). At serine 144 the chain carries 2,3-didehydroalanine (Ser).

Belongs to the PAL/histidase family. Post-translationally, contains an active site 4-methylidene-imidazol-5-one (MIO), which is formed autocatalytically by cyclization and dehydration of residues Ala-Ser-Gly.

It is found in the cytoplasm. It catalyses the reaction L-histidine = trans-urocanate + NH4(+). It functions in the pathway amino-acid degradation; L-histidine degradation into L-glutamate; N-formimidoyl-L-glutamate from L-histidine: step 1/3. The chain is Histidine ammonia-lyase from Enterobacter sp. (strain 638).